A 564-amino-acid chain; its full sequence is Beta-N-acetylglucosaminidase/beta-glucosidase (564 aa).

The active-site Nucleophile is D283.

This sequence belongs to the glycosyl hydrolase 3 family.

The catalysed reaction is Hydrolysis of terminal non-reducing N-acetyl-D-hexosamine residues in N-acetyl-beta-D-hexosaminides.. The enzyme catalyses Hydrolysis of terminal, non-reducing beta-D-glucosyl residues with release of beta-D-glucose.. Its function is as follows. Catalyzes the cleavage of beta-N-acetyl-D-glucosaminides and beta-D-glucosides. Might be involved in the degradation of glucuronic acid-containing glycosaminoglycans such as hyaluronic acid. The protein is Beta-N-acetylglucosaminidase/beta-glucosidase (nag3) of Cellulomonas fimi.